The chain runs to 248 residues: Sulfur carrier protein FdhD (248 aa).

C99 functions as the Cysteine persulfide intermediate in the catalytic mechanism. 232–237 (FVRGKR) lines the Mo-bis(molybdopterin guanine dinucleotide) pocket.

The protein belongs to the FdhD family.

Its subcellular location is the cytoplasm. Required for formate dehydrogenase (FDH) activity. Acts as a sulfur carrier protein that transfers sulfur from IscS to the molybdenum cofactor prior to its insertion into FDH. The polypeptide is Sulfur carrier protein FdhD (Methanothermobacter thermautotrophicus (strain ATCC 29096 / DSM 1053 / JCM 10044 / NBRC 100330 / Delta H) (Methanobacterium thermoautotrophicum)).